Reading from the N-terminus, the 497-residue chain is Serine hydroxymethyltransferase, mitochondrial (497 aa).

Residues 1 to 27 (MFIRRLHTSSRRLTCGEALRACQQTGA) constitute a mitochondrion transit peptide. Lys-272 carries the post-translational modification N6-(pyridoxal phosphate)lysine.

The protein belongs to the SHMT family. In terms of assembly, homotetramer. The cofactor is pyridoxal 5'-phosphate.

The protein resides in the mitochondrion. The catalysed reaction is (6R)-5,10-methylene-5,6,7,8-tetrahydrofolate + glycine + H2O = (6S)-5,6,7,8-tetrahydrofolate + L-serine. Its pathway is one-carbon metabolism; tetrahydrofolate interconversion. Interconversion of serine and glycine. The protein is Serine hydroxymethyltransferase, mitochondrial (SHM1) of Eremothecium gossypii (strain ATCC 10895 / CBS 109.51 / FGSC 9923 / NRRL Y-1056) (Yeast).